Here is a 165-residue protein sequence, read N- to C-terminus: MRILGIDPGTMVVGYGVIEAADDELSLIGFSSLTPPASAPIPQRLAYIYKGLVEVIELYQPDEVAVESPFADKNIKSALAIGKAQAVALLAAANHSLSVTEYSPACIKSRVSGSGTASKEQIQEMVRLLLNLAEIPQPNDAADALAVAICHHSHRAFANITSQGD.

Residues D7, E67, and D140 contribute to the active site. Mg(2+) contacts are provided by D7, E67, and D140.

It belongs to the RuvC family. Homodimer which binds Holliday junction (HJ) DNA. The HJ becomes 2-fold symmetrical on binding to RuvC with unstacked arms; it has a different conformation from HJ DNA in complex with RuvA. In the full resolvosome a probable DNA-RuvA(4)-RuvB(12)-RuvC(2) complex forms which resolves the HJ. Mg(2+) serves as cofactor.

It is found in the cytoplasm. The enzyme catalyses Endonucleolytic cleavage at a junction such as a reciprocal single-stranded crossover between two homologous DNA duplexes (Holliday junction).. In terms of biological role, the RuvA-RuvB-RuvC complex processes Holliday junction (HJ) DNA during genetic recombination and DNA repair. Endonuclease that resolves HJ intermediates. Cleaves cruciform DNA by making single-stranded nicks across the HJ at symmetrical positions within the homologous arms, yielding a 5'-phosphate and a 3'-hydroxyl group; requires a central core of homology in the junction. The consensus cleavage sequence is 5'-(A/T)TT(C/G)-3'. Cleavage occurs on the 3'-side of the TT dinucleotide at the point of strand exchange. HJ branch migration catalyzed by RuvA-RuvB allows RuvC to scan DNA until it finds its consensus sequence, where it cleaves and resolves the cruciform DNA. This is Crossover junction endodeoxyribonuclease RuvC from Dehalococcoides mccartyi (strain ATCC BAA-2266 / KCTC 15142 / 195) (Dehalococcoides ethenogenes (strain 195)).